Here is a 253-residue protein sequence, read N- to C-terminus: AA9 family lytic polysaccharide monooxygenase F (253 aa).

A signal peptide spans 1 to 16 (MKVLATLLASVGLVAA). His-17 is a binding site for Cu(2+). Asn-22 is a glycosylation site (N-linked (GlcNAc...) asparagine). Disulfide bonds link Cys-75/Cys-193 and Cys-163/Cys-253. His-105 is a binding site for Cu(2+). Residue Asn-143 is glycosylated (N-linked (GlcNAc...) asparagine). The O2 site is built by His-179 and Gln-188. Tyr-190 contacts Cu(2+).

The protein belongs to the polysaccharide monooxygenase AA9 family. Requires Cu(2+) as cofactor.

The protein resides in the secreted. It catalyses the reaction [(1-&gt;4)-beta-D-glucosyl]n+m + reduced acceptor + O2 = 4-dehydro-beta-D-glucosyl-[(1-&gt;4)-beta-D-glucosyl]n-1 + [(1-&gt;4)-beta-D-glucosyl]m + acceptor + H2O.. In terms of biological role, lytic polysaccharide monooxygenase (LPMO) that depolymerizes crystalline and amorphous polysaccharides via the oxidation of scissile alpha- or beta-(1-4)-glycosidic bonds, yielding C1 or C4 oxidation products. Catalysis by LPMOs requires the reduction of the active-site copper from Cu(II) to Cu(I) by a reducing agent and H(2)O(2) or O(2) as a cosubstrate. This is AA9 family lytic polysaccharide monooxygenase F from Podospora anserina (strain S / ATCC MYA-4624 / DSM 980 / FGSC 10383) (Pleurage anserina).